The sequence spans 526 residues: Maturase K (526 aa).

The protein belongs to the intron maturase 2 family. MatK subfamily.

The protein localises to the plastid. It is found in the chloroplast. Usually encoded in the trnK tRNA gene intron. Probably assists in splicing its own and other chloroplast group II introns. The sequence is that of Maturase K from Iris setosa (Hiougi-ayame).